The following is a 220-amino-acid chain: Deoxyribose-phosphate aldolase (220 aa).

Residue Asp-89 is the Proton donor/acceptor of the active site. The Schiff-base intermediate with acetaldehyde role is filled by Lys-151. The Proton donor/acceptor role is filled by Lys-180.

Belongs to the DeoC/FbaB aldolase family. DeoC type 1 subfamily.

Its subcellular location is the cytoplasm. The enzyme catalyses 2-deoxy-D-ribose 5-phosphate = D-glyceraldehyde 3-phosphate + acetaldehyde. Its pathway is carbohydrate degradation; 2-deoxy-D-ribose 1-phosphate degradation; D-glyceraldehyde 3-phosphate and acetaldehyde from 2-deoxy-alpha-D-ribose 1-phosphate: step 2/2. Catalyzes a reversible aldol reaction between acetaldehyde and D-glyceraldehyde 3-phosphate to generate 2-deoxy-D-ribose 5-phosphate. The polypeptide is Deoxyribose-phosphate aldolase (Streptococcus sanguinis (strain SK36)).